The following is a 313-amino-acid chain: MKRWVKVWEKFIEEKIREIRETVGDSKAIIALSGGVDSSTAAVLAHRAIGDRLHAVFVNTGFLRKGEPEFVIKTFRDEFGMNLHYVDAQDRFFAALKGVTDPEEKRKIIGRVFIEVFEEVAKDIGAEYLIQGTIAPDWIESQGKIKSHHNVGGLPEKLNLKIIEPLRDLYKDEVRQLAKELGLPEKIYNRMPFPGPGLAVRVIGEVTPEKIRIVREANAIVEEEIEKAGLRPWQAFAVLLGVKTVGVQGDIRAYKETIAVRIVESVDGMTANAMNVPWEVLQRIAFRITSEIPEVGRVLYDITNKPPATIEFE.

Residues lysine 6–arginine 190 form the GMPS ATP-PPase domain. Residue serine 33–serine 39 participates in ATP binding.

Heterodimer composed of a glutamine amidotransferase subunit (A) and a GMP-binding subunit (B).

The catalysed reaction is XMP + L-glutamine + ATP + H2O = GMP + L-glutamate + AMP + diphosphate + 2 H(+). The protein operates within purine metabolism; GMP biosynthesis; GMP from XMP (L-Gln route): step 1/1. In terms of biological role, catalyzes the synthesis of GMP from XMP. This Pyrococcus furiosus (strain ATCC 43587 / DSM 3638 / JCM 8422 / Vc1) protein is GMP synthase [glutamine-hydrolyzing] subunit B (guaAB).